A 261-amino-acid chain; its full sequence is Type II restriction enzyme Sau96I (261 aa).

As to quaternary structure, monomer.

It carries out the reaction Endonucleolytic cleavage of DNA to give specific double-stranded fragments with terminal 5'-phosphates.. In terms of biological role, a P subtype restriction enzyme that recognizes the double-stranded sequence 5'-GGNCC-3' and cleaves after G-1. This Staphylococcus aureus protein is Type II restriction enzyme Sau96I.